The chain runs to 94 residues: Large ribosomal subunit protein bL28A (94 aa).

The tract at residues 63–94 (GHRGRRRAARAGSAPAHFARQAGSSLRTAAIL) is disordered. Low complexity predominate over residues 72–82 (RAGSAPAHFAR). A compositionally biased stretch (polar residues) spans 84-94 (AGSSLRTAAIL).

Belongs to the bacterial ribosomal protein bL28 family.

The chain is Large ribosomal subunit protein bL28A (rpmB1) from Mycobacterium bovis (strain ATCC BAA-935 / AF2122/97).